A 133-amino-acid polypeptide reads, in one-letter code: L-cystatin (133 aa).

A signal peptide spans 1–19; that stretch reads MEGYNILAVLIILVGVSMG. Gln-20 carries the pyrrolidone carboxylic acid modification. The short motif at 67–71 is the Secondary area of contact element; that stretch reads QVVSG. Disulfide bonds link Cys-85-Cys-98 and Cys-109-Cys-129.

This sequence belongs to the cystatin family. In terms of tissue distribution, expressed in hemocytes and slightly in heart.

Its subcellular location is the cytoplasmic granule. In terms of biological role, tight-binding inhibitor for papain. It has an important role in the protection of cells, antimicrobial activity against Gram-negative bacteria, defense against invading microbes, and response to external stimuli. The sequence is that of L-cystatin from Tachypleus tridentatus (Japanese horseshoe crab).